A 642-amino-acid chain; its full sequence is Threonine--tRNA ligase (642 aa).

The TGS domain maps to 1–61 (MPIITLPDGS…SEDANLEIIT (61 aa)). Residues 243-534 (DHRKIGKALD…ITEEYAGFFP (292 aa)) are catalytic. Residues Cys334, His385, and His511 each coordinate Zn(2+).

This sequence belongs to the class-II aminoacyl-tRNA synthetase family. As to quaternary structure, homodimer. It depends on Zn(2+) as a cofactor.

The protein localises to the cytoplasm. It catalyses the reaction tRNA(Thr) + L-threonine + ATP = L-threonyl-tRNA(Thr) + AMP + diphosphate + H(+). Its function is as follows. Catalyzes the attachment of threonine to tRNA(Thr) in a two-step reaction: L-threonine is first activated by ATP to form Thr-AMP and then transferred to the acceptor end of tRNA(Thr). Also edits incorrectly charged L-seryl-tRNA(Thr). The chain is Threonine--tRNA ligase from Histophilus somni (strain 129Pt) (Haemophilus somnus).